Here is a 94-residue protein sequence, read N- to C-terminus: MPSVNNYFDNKVTSIAFQTATKPATVGVMEIGDYEFGTSEFETMTVVSGALTVKLPESDEWQTFNAGAQFTVDANQKFQVKVEVETAYLCTYGE.

This sequence belongs to the nucleoside phosphorylase PpnP family.

The catalysed reaction is a purine D-ribonucleoside + phosphate = a purine nucleobase + alpha-D-ribose 1-phosphate. It carries out the reaction adenosine + phosphate = alpha-D-ribose 1-phosphate + adenine. The enzyme catalyses cytidine + phosphate = cytosine + alpha-D-ribose 1-phosphate. It catalyses the reaction guanosine + phosphate = alpha-D-ribose 1-phosphate + guanine. The catalysed reaction is inosine + phosphate = alpha-D-ribose 1-phosphate + hypoxanthine. It carries out the reaction thymidine + phosphate = 2-deoxy-alpha-D-ribose 1-phosphate + thymine. The enzyme catalyses uridine + phosphate = alpha-D-ribose 1-phosphate + uracil. It catalyses the reaction xanthosine + phosphate = alpha-D-ribose 1-phosphate + xanthine. Its function is as follows. Catalyzes the phosphorolysis of diverse nucleosides, yielding D-ribose 1-phosphate and the respective free bases. Can use uridine, adenosine, guanosine, cytidine, thymidine, inosine and xanthosine as substrates. Also catalyzes the reverse reactions. The chain is Pyrimidine/purine nucleoside phosphorylase 2 from Psychrobacter arcticus (strain DSM 17307 / VKM B-2377 / 273-4).